Here is a 737-residue protein sequence, read N- to C-terminus: Zinc finger protein 280C (737 aa).

Residues lysine 5, lysine 10, lysine 14, lysine 33, and lysine 55 each participate in a glycyl lysine isopeptide (Lys-Gly) (interchain with G-Cter in SUMO2) cross-link. Over residues 57-66 (AISNILNRGH) the composition is skewed to polar residues. Residues 57-137 (AISNILNRGH…DFTKNSQVGS (81 aa)) are disordered. A Glycyl lysine isopeptide (Lys-Gly) (interchain with G-Cter in SUMO2) cross-link involves residue lysine 75. Serine 80 is modified (phosphoserine). Over residues 112 to 123 (SKSSQSSVTVEN) the composition is skewed to polar residues. Residues lysine 113, lysine 126, lysine 167, lysine 174, lysine 180, and lysine 187 each participate in a glycyl lysine isopeptide (Lys-Gly) (interchain with G-Cter in SUMO2) cross-link. Polar residues predominate over residues 176-185 (PSTSKVNSVT). A disordered region spans residues 176 to 223 (PSTSKVNSVTPKKPKTSEDVPQINPSTSLPLIGSPPVTSSQVMLSKGT). The segment covering 211-223 (PVTSSQVMLSKGT) has biased composition (polar residues). Threonine 223 is modified (phosphothreonine). Phosphoserine is present on serine 227. Lysine 273 participates in a covalent cross-link: Glycyl lysine isopeptide (Lys-Gly) (interchain with G-Cter in SUMO2). 5 consecutive C2H2-type zinc fingers follow at residues 316–338 (FKCF…MKHH), 353–376 (TTCQ…ESTH), 383–406 (TICK…KDTH), 413–436 (YVCQ…RAAH), and 470–492 (HRCP…KAQH). Lysine 522 participates in a covalent cross-link: Glycyl lysine isopeptide (Lys-Gly) (interchain with G-Cter in SUMO2). The span at 535–579 (SFLQVTPPTSQNTTARNPRKSNASRSKTSKLHATTSTASKVNTSK) shows a compositional bias: polar residues. Positions 535-602 (SFLQVTPPTS…YKQKRQRNRK (68 aa)) are disordered. Threonine 540 bears the Phosphothreonine mark. Residues lysine 564 and lysine 574 each participate in a glycyl lysine isopeptide (Lys-Gly) (interchain with G-Cter in SUMO2) cross-link. Residues 580 to 602 (PRGRIAKSKAKPSYKQKRQRNRK) show a composition bias toward basic residues.

It is found in the nucleus. May function as a transcription factor. This is Zinc finger protein 280C (ZNF280C) from Homo sapiens (Human).